The sequence spans 102 residues: MAKQKIRIRLKAFDHSLLDQSALKIVETAKTTGAKVAGPVPLPTEKDIVTILRAPHKYKDAREQFEIRTHKRLIDIISPSPKTVDALMRLDLPAGVDIEIKL.

It belongs to the universal ribosomal protein uS10 family. As to quaternary structure, part of the 30S ribosomal subunit.

Functionally, involved in the binding of tRNA to the ribosomes. The chain is Small ribosomal subunit protein uS10 from Clostridium botulinum (strain ATCC 19397 / Type A).